The chain runs to 210 residues: Peroxiredoxin-5, mitochondrial (210 aa).

The transit peptide at 1–48 (MLQLGLRVLGCKASSVLRASTCLAGRAGRKEAGWECGGARSFSSSAVT) directs the protein to the mitochondrion. Residues 52 to 210 (IKVGDAIPSV…SLAPNILSQL (159 aa)) form the Thioredoxin domain. N6-acetyllysine; alternate is present on lysine 70. Lysine 70 is modified (N6-succinyllysine; alternate). Lysine 71 is modified (N6-acetyllysine). Lysine 79 is subject to N6-acetyllysine; alternate. Residue lysine 79 is modified to N6-succinyllysine; alternate. Cysteine 96 functions as the Cysteine sulfenic acid (-SOH) intermediate in the catalytic mechanism. The S-palmitoyl cysteine moiety is linked to residue cysteine 96. Cysteine 96 and cysteine 200 are disulfide-bonded. Lysine 112 is subject to N6-succinyllysine. Phosphoserine is present on residues serine 167 and serine 178. The Microbody targeting signal signature appears at 208–210 (SQL).

It belongs to the peroxiredoxin family. Prx5 subfamily. Monomer. Post-translationally, S-palmitoylated. Palmitoylation occurs on the active site, inhibiting its reactivity; therefore PRDX5 palmitoylation status determines its antioxidant capacity. S-palmitoylated. Depalmitoylated by ABHD10. As to expression, widely expressed.

Its subcellular location is the mitochondrion. It is found in the cytoplasm. The protein resides in the peroxisome matrix. The enzyme catalyses a hydroperoxide + [thioredoxin]-dithiol = an alcohol + [thioredoxin]-disulfide + H2O. Thiol-specific peroxidase that catalyzes the reduction of hydrogen peroxide and organic hydroperoxides to water and alcohols, respectively. Plays a role in cell protection against oxidative stress by detoxifying peroxides and as sensor of hydrogen peroxide-mediated signaling events. This Mus musculus (Mouse) protein is Peroxiredoxin-5, mitochondrial.